We begin with the raw amino-acid sequence, 293 residues long: Glutamyl-Q tRNA(Asp) synthetase (293 aa).

L-glutamate contacts are provided by residues 8–12 and Glu-44; that span reads RFAPT. The 'HIGH' region motif lies at 11 to 21; that stretch reads PTPSGYLHFGS. Residues Cys-100, Cys-102, Tyr-114, and Cys-118 each coordinate Zn(2+). Tyr-171 and Arg-189 together coordinate L-glutamate. A 'KMSKS' region motif is present at residues 227–231; that stretch reads KLGKS. Lys-230 lines the ATP pocket.

It belongs to the class-I aminoacyl-tRNA synthetase family. GluQ subfamily. Zn(2+) is required as a cofactor.

Catalyzes the tRNA-independent activation of glutamate in presence of ATP and the subsequent transfer of glutamate onto a tRNA(Asp). Glutamate is transferred on the 2-amino-5-(4,5-dihydroxy-2-cyclopenten-1-yl) moiety of the queuosine in the wobble position of the QUC anticodon. This is Glutamyl-Q tRNA(Asp) synthetase from Pseudomonas aeruginosa (strain ATCC 15692 / DSM 22644 / CIP 104116 / JCM 14847 / LMG 12228 / 1C / PRS 101 / PAO1).